Here is a 376-residue protein sequence, read N- to C-terminus: PqqA peptide cyclase (376 aa).

Positions 4–219 constitute a Radical SAM core domain; sequence VPPPLSVLLE…VETARRSLGD (216 aa). The [4Fe-4S] cluster site is built by Cys18, Cys22, and Cys25.

It belongs to the radical SAM superfamily. PqqE family. Interacts with PqqD. The interaction is necessary for activity of PqqE. [4Fe-4S] cluster is required as a cofactor.

It catalyses the reaction [PQQ precursor protein] + S-adenosyl-L-methionine = E-Y cross-linked-[PQQ precursor protein] + 5'-deoxyadenosine + L-methionine + H(+). It functions in the pathway cofactor biosynthesis; pyrroloquinoline quinone biosynthesis. Its function is as follows. Catalyzes the cross-linking of a glutamate residue and a tyrosine residue in the PqqA protein as part of the biosynthesis of pyrroloquinoline quinone (PQQ). The protein is PqqA peptide cyclase of Xanthomonas campestris pv. campestris (strain 8004).